A 96-amino-acid polypeptide reads, in one-letter code: Small ribosomal subunit protein bS6c (96 aa).

It belongs to the bacterial ribosomal protein bS6 family.

The protein resides in the plastid. It is found in the chloroplast. Its function is as follows. Binds together with bS18 to 16S ribosomal RNA. This is Small ribosomal subunit protein bS6c (rps6) from Trieres chinensis (Marine centric diatom).